Here is an 876-residue protein sequence, read N- to C-terminus: Inter-alpha-trypsin inhibitor heavy chain H3 (876 aa).

The N-terminal stretch at 1–18 (MVALSHLGSALQLGSLWG) is a signal peptide. Residues 19–31 (FPRSPFRLLGKRS) constitute a propeptide that is removed on maturation. The VIT domain occupies 26 to 155 (LLGKRSLPEG…KVTFELTYEE (130 aa)). A glycan (N-linked (GlcNAc...) asparagine) is linked at asparagine 88. The VWFA domain maps to 281-464 (NVAFVIDISG…LQLQGFYEEV (184 aa)). N-linked (GlcNAc...) asparagine glycosylation occurs at asparagine 577. Residue aspartate 637 is modified to Aspartate 1-(chondroitin 4-sulfate)-ester. A propeptide spanning residues 638–876 (PHFIIQVPEK…HTDYIVPNLF (239 aa)) is cleaved from the precursor.

It belongs to the ITIH family. I-alpha-I plasma protease inhibitors are assembled from one or two heavy chains (HC) and one light chain, bikunin. Pre-alpha-inhibitor (P-alpha-I) is composed of ITIH3/HC3 and bikunin. In terms of processing, heavy chains are linked to bikunin via chondroitin 4-sulfate esterified to the alpha-carboxyl of the C-terminal aspartate after propeptide cleavage.

The protein resides in the secreted. In terms of biological role, may act as a carrier of hyaluronan in serum or as a binding protein between hyaluronan and other matrix protein, including those on cell surfaces in tissues to regulate the localization, synthesis and degradation of hyaluronan which are essential to cells undergoing biological processes. This is Inter-alpha-trypsin inhibitor heavy chain H3 (ITIH3) from Pongo abelii (Sumatran orangutan).